Reading from the N-terminus, the 430-residue chain is Adenylosuccinate synthetase (430 aa).

Residues 12–18 and 40–42 contribute to the GTP site; these read GDEGKGK and GHT. Asp13 acts as the Proton acceptor in catalysis. Mg(2+) is bound by residues Asp13 and Gly40. Residues 13–16, 38–41, Thr128, Arg142, Gln223, Thr238, and Arg302 each bind IMP; these read DEGK and NAGH. The active-site Proton donor is His41. 298-304 contacts substrate; it reads TTTGRPR. Residues Arg304, 330–332, and 412–414 contribute to the GTP site; these read SID and SVG.

The protein belongs to the adenylosuccinate synthetase family. Homodimer. Mg(2+) is required as a cofactor.

Its subcellular location is the cytoplasm. It catalyses the reaction IMP + L-aspartate + GTP = N(6)-(1,2-dicarboxyethyl)-AMP + GDP + phosphate + 2 H(+). The protein operates within purine metabolism; AMP biosynthesis via de novo pathway; AMP from IMP: step 1/2. Functionally, plays an important role in the de novo pathway of purine nucleotide biosynthesis. Catalyzes the first committed step in the biosynthesis of AMP from IMP. The chain is Adenylosuccinate synthetase from Streptococcus pyogenes serotype M5 (strain Manfredo).